A 122-amino-acid polypeptide reads, in one-letter code: Holo-[acyl-carrier-protein] synthase (122 aa).

Asp-8 and Glu-56 together coordinate Mg(2+).

This sequence belongs to the P-Pant transferase superfamily. AcpS family. Mg(2+) is required as a cofactor.

The protein localises to the cytoplasm. The catalysed reaction is apo-[ACP] + CoA = holo-[ACP] + adenosine 3',5'-bisphosphate + H(+). Transfers the 4'-phosphopantetheine moiety from coenzyme A to a Ser of acyl-carrier-protein. The protein is Holo-[acyl-carrier-protein] synthase of Salinispora arenicola (strain CNS-205).